Here is a 361-residue protein sequence, read N- to C-terminus: Outer mitochondrial transmembrane helix translocase (361 aa).

The Mitochondrial intermembrane segment spans residues 1–15 (MVHAEAFSRPLSRNE). A helical membrane pass occupies residues 16 to 32 (VVGLIFRLTIFGAVTYF). Over 33–361 (TIKWMVDAID…QSVLTHVCLD (329 aa)) the chain is Cytoplasmic. Position 133-140 (133-140 (GPPGCGKT)) interacts with ATP. Position 322 is a phosphoserine (Ser-322).

This sequence belongs to the AAA ATPase family. MSP1 subfamily. In terms of assembly, interacts with GRIA2 and GRIP1 in an ATP-dependent manner. ATAD1-catalyzed ATP hydrolysis disrupts not only its binding to GRIA2 and GRIP1, but also interaction between GRIP1 and GRIA2, leading to AMPAR complex disassembly.

The protein resides in the mitochondrion outer membrane. It localises to the peroxisome membrane. The protein localises to the postsynaptic cell membrane. It carries out the reaction [protein]-with a C-terminal TM segment(out) + ATP + H2O = [protein]-with a C-terminal TM segment(in) + ADP + phosphate + H(+). Outer mitochondrial translocase required to remove mislocalized tail-anchored transmembrane proteins on mitochondria. Specifically recognizes and binds tail-anchored transmembrane proteins: acts as a dislocase that mediates the ATP-dependent extraction of mistargeted tail-anchored transmembrane proteins from the mitochondrion outer membrane. Also plays a critical role in regulating the surface expression of AMPA receptors (AMPAR), thereby regulating synaptic plasticity and learning and memory. Required for NMDA-stimulated AMPAR internalization and inhibition of GRIA1 and GRIA2 recycling back to the plasma membrane; these activities are ATPase-dependent. This Rattus norvegicus (Rat) protein is Outer mitochondrial transmembrane helix translocase.